A 416-amino-acid chain; its full sequence is E3 ubiquitin-protein ligase RNFT1 (416 aa).

Over residues 27–45 (QSSSGHTHHQPGSNDSPSV) the composition is skewed to polar residues. Disordered stretches follow at residues 27–50 (QSSS…MSLP) and 63–116 (GDVT…ADSR). The segment covering 77–86 (GARSSSRRVR) has biased composition (basic residues). 6 helical membrane passes run 146–166 (LVVQ…TFLY), 184–204 (LQCL…YYTF), 214–234 (VFMN…VVGI), 237–257 (FIGK…PSFV), 265–287 (YWYM…PVWF), and 302–322 (WHFG…IIFG). A required for ubiquitin ligase activity and for protection against ER stress-induced cell death region spans residues 349–400 (CSEVDGMCAICQAEFIKPIVLVCQHVFCEECISLWFNKEKTCPLCRTVISNQ). The RING-type zinc finger occupies 356–394 (CAICQAEFIKPIVLVCQHVFCEECISLWFNKEKTCPLCR).

It localises to the endoplasmic reticulum membrane. It catalyses the reaction S-ubiquitinyl-[E2 ubiquitin-conjugating enzyme]-L-cysteine + [acceptor protein]-L-lysine = [E2 ubiquitin-conjugating enzyme]-L-cysteine + N(6)-ubiquitinyl-[acceptor protein]-L-lysine.. Its pathway is protein modification; protein ubiquitination. In terms of biological role, E3 ubiquitin-protein ligase that acts in the endoplasmic reticulum (ER)-associated degradation (ERAD) pathway, which targets misfolded proteins that accumulate in the endoplasmic reticulum (ER) for ubiquitination and subsequent proteasome-mediated degradation. Protects cells from ER stress-induced apoptosis. This chain is E3 ubiquitin-protein ligase RNFT1 (rnft1), found in Xenopus tropicalis (Western clawed frog).